An 841-amino-acid chain; its full sequence is Neuronal tyrosine-phosphorylated phosphoinositide-3-kinase adapter 1 (841 aa).

5 disordered regions span residues 1–45 (MNLL…PGVR), 64–448 (PASQ…PAAL), 655–679 (RAWN…TSGI), 745–769 (RPCS…PLPP), and 812–833 (LPSW…RRQH). Residues 8–25 (TKLEWRQHKEEEAKRSSS) show a composition bias toward basic and acidic residues. The span at 26–39 (KEVAPAGSAGPAAG) shows a compositional bias: low complexity. Positions 76–186 (SAMAPRSLSC…DESCPPGPSP (111 aa)) are involved in CYFIP1- and NCKAP1-binding. Gly residues predominate over residues 94 to 103 (VGGGPGGASG). Residues 114 to 123 (PPAKPRRHPS) show a composition bias toward basic residues. Polar residues predominate over residues 167–176 (SPNTQLSVSF). A compositionally biased stretch (gly residues) spans 224-243 (FRGGGRSGGGLAGPPLGGGG). Over residues 252–261 (SDSEESEAIY) the composition is skewed to acidic residues. Positions 279–295 (GPPPLTATSPPQQPHAL) are enriched in pro residues. Residues 759–769 (PALPLPLPLPP) are compositionally biased toward pro residues.

The protein belongs to the NYAP family. As to quaternary structure, interacts with ACOT9, ARHGAP26 and PIK3R2. Interacts with components of the WAVE1 complex, CYFIP1 and NCKAP1; this interaction mediates PI3K-WAVE1 association and actin cytoskeleton remodeling. Phosphorylated on tyrosine residues by FYN upon stimulation with CNTN5.

In terms of biological role, activates PI3K and concomitantly recruits the WAVE1 complex to the close vicinity of PI3K and regulates neuronal morphogenesis. This Homo sapiens (Human) protein is Neuronal tyrosine-phosphorylated phosphoinositide-3-kinase adapter 1 (NYAP1).